An 88-amino-acid chain; its full sequence is Small ribosomal subunit protein uS15 (88 aa).

Basic and acidic residues predominate over residues 1–20 (MLATEKKQELIDQYKRHEGD). The tract at residues 1–21 (MLATEKKQELIDQYKRHEGDT) is disordered.

It belongs to the universal ribosomal protein uS15 family. In terms of assembly, part of the 30S ribosomal subunit. Forms a bridge to the 50S subunit in the 70S ribosome, contacting the 23S rRNA.

One of the primary rRNA binding proteins, it binds directly to 16S rRNA where it helps nucleate assembly of the platform of the 30S subunit by binding and bridging several RNA helices of the 16S rRNA. Its function is as follows. Forms an intersubunit bridge (bridge B4) with the 23S rRNA of the 50S subunit in the ribosome. The sequence is that of Small ribosomal subunit protein uS15 from Syntrophotalea carbinolica (strain DSM 2380 / NBRC 103641 / GraBd1) (Pelobacter carbinolicus).